We begin with the raw amino-acid sequence, 560 residues long: Nuclear receptor subfamily 5 group A member 2 (560 aa).

The segment at 17-54 (GLPAIAPAPGSETPHSPKLEEKHREKRAGLPDRHRRPI) is disordered. The segment covering 31 to 48 (HSPKLEEKHREKRAGLPD) has biased composition (basic and acidic residues). A DNA-binding region (nuclear receptor) is located at residues 104–179 (EELCPVCGDK…VGMKLEAVRA (76 aa)). Residues C107, C110, C124, C127, C143, C149, C159, and C162 each coordinate Zn(2+). 2 consecutive NR C4-type zinc fingers follow at residues 107–127 (CPVC…CESC) and 143–162 (CIEN…CPYC). Residues 173–188 (KLEAVRADRMRGGRNK) are C-terminal extension (CTE). Positions 189–208 (FGPMYKRDRALKQQKKALIR) match the FTZ-F1 box motif. K289 participates in a covalent cross-link: Glycyl lysine isopeptide (Lys-Gly) (interchain with G-Cter in SUMO1). The 240-residue stretch at 319 to 558 (SIPHLILELL…NLLIEMLHAK (240 aa)) folds into the NR LBD domain. The a phospholipid derivative site is built by Y535 and K539. The tract at residues 547–558 (YNNLLIEMLHAK) is AF-2.

It belongs to the nuclear hormone receptor family. NR5 subfamily. Monomer; Binds DNA as a monomer. Interacts with nuclear receptor corepressors NR0B1 and NR0B2; repressing NR5A2 nuclear receptor activity. Interacts with nuclear receptor coactivators CTNNB1, PPARGC1A and NCOA2; interaction takes place following ligand-binding and promotes target gene activation. Interacts (when sumoylated) with GPS2; interaction with GPS2 onto hepatic acute phase protein promoters prevents N-Cor corepressor complex dissociation. Interacts with HNF1A. Interacts with GRIP1. Post-translationally, sumoylated by SUMO1 at Lys-289 during the hepatic acute phase response, leading to promote interaction with GPS2 and prevent N-Cor corepressor complex dissociation.

It localises to the nucleus. Its subcellular location is the chromosome. In terms of biological role, orphan nuclear receptor that binds DNA as a monomer to the 5'-TCAAGGCCA-3' sequence and controls expression of target genes: regulates key biological processes, such as early embryonic development, cholesterol and bile acid synthesis pathways, as well as liver and pancreas morphogenesis. Ligand-binding causes conformational change which causes recruitment of coactivators, promoting target gene activation. The specific ligand is unknown, but specific phospholipids, such as phosphatidylethanolamine, phosphatidylserine, dilauroyl phosphatidylcholine and diundecanoyl phosphatidylcholine can act as ligand in vitro. Acts as a pioneer transcription factor, which unwraps target DNA from histones and elicits local opening of closed chromatin. Plays a central role during preimplantation stages of embryonic development. Plays a minor role in zygotic genome activation (ZGA) by regulating a small set of two-cell stage genes. Plays a major role in morula development (2-16 cells embryos) by acting as a master regulator at the 8-cell stage, controlling expression of lineage-specifying transcription factors and genes involved in mitosis, telomere maintenance and DNA repair. Zygotic NR5A2 binds to both closed and open chromatin with other transcription factors, often at SINE B1/Alu repeats DNA elements, promoting chromatin accessibility at nearby regulatory regions. Also involved in the epiblast stage of development and embryonic stem cell pluripotency, by promoting expression of POU5F1/OCT4. Regulates other processes later in development, such as formation of connective tissue in lower jaw and middle ear, neural stem cell differentiation, ovarian follicle development and Sertoli cell differentiation. Involved in exocrine pancreas development and acinar cell differentiation. Acts as an essential transcriptional regulator of lipid metabolism. Key regulator of cholesterol 7-alpha-hydroxylase gene (CYP7A) expression in liver. Also acts as a negative regulator of inflammation in different organs, such as, liver and pancreas. Protects against intestinal inflammation via its ability to regulate glucocorticoid production. Plays an anti-inflammatory role during the hepatic acute phase response by acting as a corepressor: inhibits the hepatic acute phase response by preventing dissociation of the N-Cor corepressor complex. Acts as a regulator of immunity by promoting lymphocyte T-cell development, proliferation and effector functions. Also involved in resolution of endoplasmic reticulum stress in the liver. In Rattus norvegicus (Rat), this protein is Nuclear receptor subfamily 5 group A member 2.